The chain runs to 147 residues: Deoxyuridine 5'-triphosphate nucleotidohydrolase (147 aa).

Residues 63–65, Asn-76, and 80–82 each bind substrate; these read RSG and TID.

This sequence belongs to the dUTPase family. It depends on Mg(2+) as a cofactor.

The enzyme catalyses dUTP + H2O = dUMP + diphosphate + H(+). The protein operates within pyrimidine metabolism; dUMP biosynthesis; dUMP from dCTP (dUTP route): step 2/2. Its function is as follows. This enzyme is involved in nucleotide metabolism: it produces dUMP, the immediate precursor of thymidine nucleotides and it decreases the intracellular concentration of dUTP so that uracil cannot be incorporated into DNA. The polypeptide is Deoxyuridine 5'-triphosphate nucleotidohydrolase (Chlamydia abortus (strain DSM 27085 / S26/3) (Chlamydophila abortus)).